Reading from the N-terminus, the 185-residue chain is Elongation factor P (185 aa).

This sequence belongs to the elongation factor P family.

The protein localises to the cytoplasm. It participates in protein biosynthesis; polypeptide chain elongation. Its function is as follows. Involved in peptide bond synthesis. Stimulates efficient translation and peptide-bond synthesis on native or reconstituted 70S ribosomes in vitro. Probably functions indirectly by altering the affinity of the ribosome for aminoacyl-tRNA, thus increasing their reactivity as acceptors for peptidyl transferase. This Deinococcus deserti (strain DSM 17065 / CIP 109153 / LMG 22923 / VCD115) protein is Elongation factor P.